Here is an 89-residue protein sequence, read N- to C-terminus: Snake venom serine protease rhinocerase (89 aa).

In terms of domain architecture, Peptidase S1 spans valine 1–lysine 89. The active-site Charge relay system is the aspartate 45. Cysteine 64 and cysteine 69 are oxidised to a cystine.

The protein belongs to the peptidase S1 family. Snake venom subfamily. Post-translationally, glycosylated. As to expression, expressed by the venom gland.

The protein resides in the secreted. Inhibited by PMSF. Not inhibited by benzamidine. In terms of biological role, snake venom serine protease that cleaves fibrinogen alpha and beta chains (FGA and FGB), but not gamma chains. Exhibits fibrinolytic and kininogenolytic. Preferentially cleaves after Arg and Lys residues. This is Snake venom serine protease rhinocerase from Bitis rhinoceros (West African gaboon viper).